The sequence spans 435 residues: Glutamyl-tRNA reductase (435 aa).

Residues 50-53 (TCNR), S110, 115-117 (ESQ), and Q121 each bind substrate. Catalysis depends on C51, which acts as the Nucleophile. An NADP(+)-binding site is contributed by 191–196 (GAGDMG).

Belongs to the glutamyl-tRNA reductase family. As to quaternary structure, homodimer.

It carries out the reaction (S)-4-amino-5-oxopentanoate + tRNA(Glu) + NADP(+) = L-glutamyl-tRNA(Glu) + NADPH + H(+). Its pathway is porphyrin-containing compound metabolism; protoporphyrin-IX biosynthesis; 5-aminolevulinate from L-glutamyl-tRNA(Glu): step 1/2. Catalyzes the NADPH-dependent reduction of glutamyl-tRNA(Glu) to glutamate 1-semialdehyde (GSA). The chain is Glutamyl-tRNA reductase from Sulfurovum sp. (strain NBC37-1).